Reading from the N-terminus, the 278-residue chain is Tumor necrosis factor receptor superfamily member 5 (278 aa).

The N-terminal stretch at 1-20 is a signal peptide; sequence MVRLPLKCLLWGCFLTAVHP. Residues 21-194 lie on the Extracellular side of the membrane; it reads EPPTSCKENQ…VCGFQSRMRA (174 aa). 4 TNFR-Cys repeats span residues 25-60, 61-103, 104-144, and 145-187; these read SCKENQYPTNSRCCNLCPPGQKLVNHCTEVTETECL, PCSS…DTTC, VCSE…TICE, and PCPV…VVCG. Intrachain disulfides connect Cys26/Cys37, Cys38/Cys51, Cys41/Cys59, Cys62/Cys77, Cys83/Cys103, Cys105/Cys119, Cys111/Cys116, and Cys125/Cys143. N-linked (GlcNAc...) asparagine glycans are attached at residues Asn153 and Asn180. The chain crosses the membrane as a helical span at residues 195 to 215; it reads LVVIPITLGILFAVLLVFLCI. Over 216–278 the chain is Cytoplasmic; the sequence is RKVTKEQETK…ESRISVQERE (63 aa).

Monomer and homodimer. Interacts with TRAF1, TRAF2, TRAF3, TRAF5 and TRAF6. Interacts with TRAF6 and MAP3K8; the interaction is required for ERK activation.

Its subcellular location is the membrane. In terms of biological role, receptor for TNFSF5/CD40LG. Transduces TRAF6- and MAP3K8-mediated signals that activate ERK in macrophages and B cells, leading to induction of immunoglobulin secretion. The sequence is that of Tumor necrosis factor receptor superfamily member 5 (CD40) from Sus scrofa (Pig).